We begin with the raw amino-acid sequence, 508 residues long: Probable cytosol aminopeptidase (508 aa).

Positions 276 and 281 each coordinate Mn(2+). Lys-288 is an active-site residue. Positions 299, 358, and 360 each coordinate Mn(2+). Residue Arg-362 is part of the active site.

Belongs to the peptidase M17 family. Mn(2+) is required as a cofactor.

It is found in the cytoplasm. The catalysed reaction is Release of an N-terminal amino acid, Xaa-|-Yaa-, in which Xaa is preferably Leu, but may be other amino acids including Pro although not Arg or Lys, and Yaa may be Pro. Amino acid amides and methyl esters are also readily hydrolyzed, but rates on arylamides are exceedingly low.. It carries out the reaction Release of an N-terminal amino acid, preferentially leucine, but not glutamic or aspartic acids.. Its function is as follows. Presumably involved in the processing and regular turnover of intracellular proteins. Catalyzes the removal of unsubstituted N-terminal amino acids from various peptides. The chain is Probable cytosol aminopeptidase from Chlorobium luteolum (strain DSM 273 / BCRC 81028 / 2530) (Pelodictyon luteolum).